The sequence spans 527 residues: Dual specificity protein kinase shkA (527 aa).

Residues 45 to 304 (ITTESILGDG…GIVSELEEII (260 aa)) form the Protein kinase domain. ATP is bound by residues 51 to 59 (LGDGSFGTV) and Lys-72. Asp-167 acts as the Proton acceptor in catalysis. Residues 424–513 (WFHGDISTSE…INTPCLGSRF (90 aa)) form the SH2 domain.

The protein belongs to the protein kinase superfamily. TKL Ser/Thr protein kinase family. SH2 domain-containing protein kinase subfamily.

It localises to the membrane. It carries out the reaction L-seryl-[protein] + ATP = O-phospho-L-seryl-[protein] + ADP + H(+). It catalyses the reaction L-threonyl-[protein] + ATP = O-phospho-L-threonyl-[protein] + ADP + H(+). Functionally, required for proper chemotaxis and phagocytosis; proper spatiotemporal control of F-actin levels in chemotaxing cells. Negative regulator of the PI3K (phosphatidylinositol 3 kinase) pathway. Predominantly phosphorylates serines and threonines and tyrosines at a lower level. The protein is Dual specificity protein kinase shkA (shkA) of Dictyostelium discoideum (Social amoeba).